An 868-amino-acid polypeptide reads, in one-letter code: Thiol protease/hemagglutinin PrtT (868 aa).

The N-terminal stretch at 1-27 (MKRIFYTLGLLLLCLPMLQAGPVTRSK) is a signal peptide. Residues Cys184 and His327 contribute to the active site.

The protein belongs to the peptidase C10 family.

In terms of biological role, appears to be specific for arginine-containing peptide bonds. Possesses hemagglutinin activity. The polypeptide is Thiol protease/hemagglutinin PrtT (prtT) (Porphyromonas gingivalis (Bacteroides gingivalis)).